The following is an 83-amino-acid chain: NAD(P)H-quinone oxidoreductase subunit L (83 aa).

A run of 2 helical transmembrane segments spans residues 15 to 35 (LFVLLAYGAVLGTYLIAVPLA) and 53 to 73 (LGVYGLVFLFFPGMIVFAPFI).

This sequence belongs to the complex I NdhL subunit family. NDH-1 can be composed of about 15 different subunits; different subcomplexes with different compositions have been identified which probably have different functions.

The protein localises to the cellular thylakoid membrane. It carries out the reaction a plastoquinone + NADH + (n+1) H(+)(in) = a plastoquinol + NAD(+) + n H(+)(out). It catalyses the reaction a plastoquinone + NADPH + (n+1) H(+)(in) = a plastoquinol + NADP(+) + n H(+)(out). Its function is as follows. NDH-1 shuttles electrons from an unknown electron donor, via FMN and iron-sulfur (Fe-S) centers, to quinones in the respiratory and/or the photosynthetic chain. The immediate electron acceptor for the enzyme in this species is believed to be plastoquinone. Couples the redox reaction to proton translocation, and thus conserves the redox energy in a proton gradient. Cyanobacterial NDH-1 also plays a role in inorganic carbon-concentration. This is NAD(P)H-quinone oxidoreductase subunit L from Synechococcus sp. (strain CC9902).